The sequence spans 365 residues: tRNA N6-adenosine threonylcarbamoyltransferase (365 aa).

2 residues coordinate Fe cation: histidine 119 and histidine 123. Residues 141–145 (LVSGG), aspartate 174, glycine 187, and asparagine 289 each bind substrate. Residue aspartate 317 coordinates Fe cation. Residues 341-365 (SARPRWPLDKTSPALIGSGKKGAKA) form a disordered region.

It belongs to the KAE1 / TsaD family. Fe(2+) serves as cofactor.

It localises to the cytoplasm. It catalyses the reaction L-threonylcarbamoyladenylate + adenosine(37) in tRNA = N(6)-L-threonylcarbamoyladenosine(37) in tRNA + AMP + H(+). Its function is as follows. Required for the formation of a threonylcarbamoyl group on adenosine at position 37 (t(6)A37) in tRNAs that read codons beginning with adenine. Is involved in the transfer of the threonylcarbamoyl moiety of threonylcarbamoyl-AMP (TC-AMP) to the N6 group of A37, together with TsaE and TsaB. TsaD likely plays a direct catalytic role in this reaction. The sequence is that of tRNA N6-adenosine threonylcarbamoyltransferase from Ruegeria sp. (strain TM1040) (Silicibacter sp.).